A 109-amino-acid chain; its full sequence is Large ribosomal subunit protein uL22 (109 aa).

This sequence belongs to the universal ribosomal protein uL22 family. In terms of assembly, part of the 50S ribosomal subunit.

This protein binds specifically to 23S rRNA; its binding is stimulated by other ribosomal proteins, e.g. L4, L17, and L20. It is important during the early stages of 50S assembly. It makes multiple contacts with different domains of the 23S rRNA in the assembled 50S subunit and ribosome. Its function is as follows. The globular domain of the protein is located near the polypeptide exit tunnel on the outside of the subunit, while an extended beta-hairpin is found that lines the wall of the exit tunnel in the center of the 70S ribosome. The protein is Large ribosomal subunit protein uL22 of Cupriavidus taiwanensis (strain DSM 17343 / BCRC 17206 / CCUG 44338 / CIP 107171 / LMG 19424 / R1) (Ralstonia taiwanensis (strain LMG 19424)).